We begin with the raw amino-acid sequence, 360 residues long: Phosphoserine aminotransferase (360 aa).

Arginine 41 provides a ligand contact to L-glutamate. Pyridoxal 5'-phosphate is bound by residues 75-76 (GR), tryptophan 101, threonine 152, aspartate 172, and glutamine 195. Lysine 196 is subject to N6-(pyridoxal phosphate)lysine. Pyridoxal 5'-phosphate is bound at residue 237 to 238 (NT).

It belongs to the class-V pyridoxal-phosphate-dependent aminotransferase family. SerC subfamily. Homodimer. Pyridoxal 5'-phosphate is required as a cofactor.

The protein localises to the cytoplasm. It carries out the reaction O-phospho-L-serine + 2-oxoglutarate = 3-phosphooxypyruvate + L-glutamate. The catalysed reaction is 4-(phosphooxy)-L-threonine + 2-oxoglutarate = (R)-3-hydroxy-2-oxo-4-phosphooxybutanoate + L-glutamate. It functions in the pathway amino-acid biosynthesis; L-serine biosynthesis; L-serine from 3-phospho-D-glycerate: step 2/3. Its pathway is cofactor biosynthesis; pyridoxine 5'-phosphate biosynthesis; pyridoxine 5'-phosphate from D-erythrose 4-phosphate: step 3/5. Catalyzes the reversible conversion of 3-phosphohydroxypyruvate to phosphoserine and of 3-hydroxy-2-oxo-4-phosphonooxybutanoate to phosphohydroxythreonine. The sequence is that of Phosphoserine aminotransferase from Pseudoalteromonas translucida (strain TAC 125).